Consider the following 184-residue polypeptide: Crossover junction endodeoxyribonuclease RuvC (184 aa).

Residues D7, E68, and D141 contribute to the active site. Positions 7, 68, and 141 each coordinate Mg(2+).

The protein belongs to the RuvC family. In terms of assembly, homodimer which binds Holliday junction (HJ) DNA. The HJ becomes 2-fold symmetrical on binding to RuvC with unstacked arms; it has a different conformation from HJ DNA in complex with RuvA. In the full resolvosome a probable DNA-RuvA(4)-RuvB(12)-RuvC(2) complex forms which resolves the HJ. Requires Mg(2+) as cofactor.

The protein resides in the cytoplasm. The enzyme catalyses Endonucleolytic cleavage at a junction such as a reciprocal single-stranded crossover between two homologous DNA duplexes (Holliday junction).. Functionally, the RuvA-RuvB-RuvC complex processes Holliday junction (HJ) DNA during genetic recombination and DNA repair. Endonuclease that resolves HJ intermediates. Cleaves cruciform DNA by making single-stranded nicks across the HJ at symmetrical positions within the homologous arms, yielding a 5'-phosphate and a 3'-hydroxyl group; requires a central core of homology in the junction. The consensus cleavage sequence is 5'-(A/T)TT(C/G)-3'. Cleavage occurs on the 3'-side of the TT dinucleotide at the point of strand exchange. HJ branch migration catalyzed by RuvA-RuvB allows RuvC to scan DNA until it finds its consensus sequence, where it cleaves and resolves the cruciform DNA. The polypeptide is Crossover junction endodeoxyribonuclease RuvC (Mycobacterium ulcerans (strain Agy99)).